The primary structure comprises 216 residues: Adenylate kinase (216 aa).

10–15 provides a ligand contact to ATP; that stretch reads GAGKGT. The NMP stretch occupies residues 30–59; it reads STGDIFRANIKEKTPLGIEAKRYIDNGQLV. Residues Thr31, Arg36, 57 to 59, 85 to 88, and Gln92 each bind AMP; these read QLV and GFPR. The LID stretch occupies residues 126–163; it reads GRRVCTSCGASYHIRFNPPKIEGKCDICDNELIQRKDD. Arg127 lines the ATP pocket. Residues Cys130 and Cys133 each contribute to the Zn(2+) site. 136–137 lines the ATP pocket; the sequence is SY. Zn(2+) contacts are provided by Cys150 and Cys153. Residues Arg160 and Arg171 each coordinate AMP. Glu199 is a binding site for ATP.

The protein belongs to the adenylate kinase family. As to quaternary structure, monomer.

The protein resides in the cytoplasm. It carries out the reaction AMP + ATP = 2 ADP. Its pathway is purine metabolism; AMP biosynthesis via salvage pathway; AMP from ADP: step 1/1. Catalyzes the reversible transfer of the terminal phosphate group between ATP and AMP. Plays an important role in cellular energy homeostasis and in adenine nucleotide metabolism. This Clostridium botulinum (strain ATCC 19397 / Type A) protein is Adenylate kinase.